The sequence spans 427 residues: Serine--tRNA ligase (427 aa).

231 to 233 (TAE) serves as a coordination point for L-serine. ATP is bound at residue 262-264 (RSE). Glutamate 285 is a binding site for L-serine. 349-352 (EISS) is a binding site for ATP. Serine 385 is an L-serine binding site.

It belongs to the class-II aminoacyl-tRNA synthetase family. Type-1 seryl-tRNA synthetase subfamily. In terms of assembly, homodimer. The tRNA molecule binds across the dimer.

The protein localises to the cytoplasm. It carries out the reaction tRNA(Ser) + L-serine + ATP = L-seryl-tRNA(Ser) + AMP + diphosphate + H(+). The catalysed reaction is tRNA(Sec) + L-serine + ATP = L-seryl-tRNA(Sec) + AMP + diphosphate + H(+). It participates in aminoacyl-tRNA biosynthesis; selenocysteinyl-tRNA(Sec) biosynthesis; L-seryl-tRNA(Sec) from L-serine and tRNA(Sec): step 1/1. Catalyzes the attachment of serine to tRNA(Ser). Is also able to aminoacylate tRNA(Sec) with serine, to form the misacylated tRNA L-seryl-tRNA(Sec), which will be further converted into selenocysteinyl-tRNA(Sec). This is Serine--tRNA ligase from Rhizobium johnstonii (strain DSM 114642 / LMG 32736 / 3841) (Rhizobium leguminosarum bv. viciae).